The sequence spans 65 residues: DNA gyrase inhibitor YacG (65 aa).

Zn(2+) is bound by residues Cys-9, Cys-12, Cys-28, and Cys-32. Residues 45–65 are disordered; that stretch reads KRIPSSGDLSESDDWSEEPKQ. Residues 54 to 65 are compositionally biased toward acidic residues; it reads SESDDWSEEPKQ.

The protein belongs to the DNA gyrase inhibitor YacG family. In terms of assembly, interacts with GyrB. Zn(2+) serves as cofactor.

Functionally, inhibits all the catalytic activities of DNA gyrase by preventing its interaction with DNA. Acts by binding directly to the C-terminal domain of GyrB, which probably disrupts DNA binding by the gyrase. This Shigella boydii serotype 18 (strain CDC 3083-94 / BS512) protein is DNA gyrase inhibitor YacG.